Here is a 189-residue protein sequence, read N- to C-terminus: Interleukin-23 subunit alpha (189 aa).

An N-terminal signal peptide occupies residues 1–19 (MLGSRAVMLLLLLPWTAQG). Cysteines 77 and 89 form a disulfide.

The protein belongs to the IL-6 superfamily. Heterodimer with IL12B; disulfide-linked. The heterodimer is known as interleukin IL-23. Interacts with IL23R; this interaction enables recruitment of IL12RB1. Secreted by activated dendritic and phagocytic cells and keratinocytes. Also expressed by dermal Langerhans cells (at protein level).

Its subcellular location is the secreted. Its function is as follows. Associates with IL12B to form the pro-inflammatory cytokine IL-23 that plays different roles in innate and adaptive immunity. Released by antigen-presenting cells such as dendritic cells or macrophages, binds to a heterodimeric receptor complex composed of IL12RB1 and IL23R to activate JAK2 and TYK2 which then phosphorylate the receptor to form a docking site leading to the phosphorylation of STAT3 and STAT4. This process leads to activation of several pathways including p38 MAPK or NF-kappa-B and promotes the production of pro-inflammatory cytokines such as interleukin-17A/IL17A. In turn, participates in the early and effective intracellular bacterial clearance. Promotes the expansion and survival of T-helper 17 cells, a CD4-positive helper T-cell subset that produces IL-17, as well as other IL-17-producing cells. This Homo sapiens (Human) protein is Interleukin-23 subunit alpha (IL23A).